The chain runs to 434 residues: Histidinol dehydrogenase (434 aa).

The substrate site is built by Ser242, Gln264, and His267. Positions 264 and 267 each coordinate Zn(2+). Active-site proton acceptor residues include Glu332 and His333. Substrate contacts are provided by His333, Asp366, Glu420, and His425. A Zn(2+)-binding site is contributed by Asp366. His425 provides a ligand contact to Zn(2+).

It belongs to the histidinol dehydrogenase family. Zn(2+) serves as cofactor.

The enzyme catalyses L-histidinol + 2 NAD(+) + H2O = L-histidine + 2 NADH + 3 H(+). Its pathway is amino-acid biosynthesis; L-histidine biosynthesis; L-histidine from 5-phospho-alpha-D-ribose 1-diphosphate: step 9/9. In terms of biological role, catalyzes the sequential NAD-dependent oxidations of L-histidinol to L-histidinaldehyde and then to L-histidine. This is Histidinol dehydrogenase from Oleidesulfovibrio alaskensis (strain ATCC BAA-1058 / DSM 17464 / G20) (Desulfovibrio alaskensis).